Here is a 106-residue protein sequence, read N- to C-terminus: Diptericin A (106 aa).

An N-terminal signal peptide occupies residues 1–19; sequence MQFTIAVALLCCAIASTLA. A propeptide spans 20-23 (removed by a dipeptidylpeptidase); the sequence is YPMP.

It belongs to the attacin/sarcotoxin-2 family.

The protein localises to the secreted. Antimicrobial peptide required to resist Gram-negative bacterial infections, regulated by Dredd. The protein is Diptericin A of Drosophila melanogaster (Fruit fly).